The sequence spans 772 residues: Transcription factor sdnS (772 aa).

The segment at residues Cys23 to Cys53 is a DNA-binding region (zn(2)-C6 fungal-type). Disordered regions lie at residues Glu94–Asn121 and Ala156–Thr180. Residues Ala100 to Asn121 are compositionally biased toward polar residues.

The protein resides in the nucleus. It participates in antibiotic biosynthesis. Functionally, transcription factor; part of the gene cluster that mediates the biosynthesis of sordarin and hypoxysordarin, glycoside antibiotics with a unique tetracyclic diterpene aglycone structure. First, the geranylgeranyl diphosphate synthase sdnC constructs GGDP from farnesyl diphosphate and isopentenyl diphosphate. The diterpene cyclase sdnA then catalyzes the cyclization of GGDP to afford cycloaraneosene. Cycloaraneosene is then hydroxylated four times by the putative cytochrome P450 monooxygenases sdnB, sdnE, sdnF and sdnH to give a hydroxylated cycloaraneosene derivative such as cycloaraneosene-8,9,13,19-tetraol. Although the order of the hydroxylations is unclear, at least C8, C9 and C13 of the cycloaraneosene skeleton are hydroxylated before the sordaricin formation. Dehydration of the 13-hydroxy group of the hydroxylated cycloaraneosene derivative might be catalyzed by an unassigned hypothetical protein such as sdnG and sdnP to construct the cyclopentadiene moiety. The FAD-dependent oxidoreductase sdnN is proposed to catalyze the oxidation at C9 of the hydroxylated cycloaraneosene derivative and also catalyze the Baeyer-Villiger oxidation to give the lactone intermediate. The presumed lactone intermediate would be hydrolyzed to give an acrolein moiety and a carboxylate moiety. Then, [4+2]cycloaddition would occur between the acrolein moiety and the cyclopentadiene moiety to give sordaricin. SdnN might also be involved in the [4+2]cycloaddition after the hypothesized oxidation to accommodate the oxidized product and prompt the [4+2]cycloaddition. GDP-6-deoxy-D-altrose may be biosynthesized from GDP-D-mannose by the putative GDP-mannose-4,6-dehydratase sdnI and the short-chain dehydrogenase sdnK. The glycosyltransferase sdnJ catalyzes the attachment of 6-deoxy-D-altrose onto the 19-hydroxy group of sordaricin to give 4'-O-demethylsordarin. The methyltransferase sdnD would complete the biosynthesis of sordarin. Sordarin can be further modified into hypoxysordarin. The unique acyl chain at the 3'-hydroxy group of hypoxysordarin would be constructed by an iterative type I PKS sdnO and the trans-acting polyketide methyltransferase sdnL. SdnL would be responsible for the introduction of an alpha-methyl group of the polyketide chain. Alternatively, the beta-lactamase-like protein sdnR might be responsible for the cleavage and transfer of the polyketide chain from the PKS sdnO to sordarin. Two putative cytochrome P450 monooxygenases, sdnQ and sdnT, might catalyze the epoxidations of the polyketide chain to complete the biosynthesis of hypoxysordarin. Transcriptional regulators sdnM and sdnS are presumably encoded for the transcriptional regulation of the expression of the sdn gene cluster. This Sordaria araneosa (Pleurage araneosa) protein is Transcription factor sdnS.